A 140-amino-acid chain; its full sequence is uncharacterized protein (140 aa).

Residues 121 to 140 (EEVKNGELIDPNVTTEDEKL) are disordered.

This is an uncharacterized protein from Schizosaccharomyces pombe (strain 972 / ATCC 24843) (Fission yeast).